The following is a 279-amino-acid chain: 1D-myo-inositol 2-acetamido-2-deoxy-alpha-D-glucopyranoside deacetylase (279 aa).

Residues histidine 12, aspartate 15, and histidine 146 each coordinate Zn(2+).

This sequence belongs to the MshB deacetylase family. Requires Zn(2+) as cofactor.

The catalysed reaction is 1D-myo-inositol 2-acetamido-2-deoxy-alpha-D-glucopyranoside + H2O = 1D-myo-inositol 2-amino-2-deoxy-alpha-D-glucopyranoside + acetate. Its function is as follows. Catalyzes the deacetylation of 1D-myo-inositol 2-acetamido-2-deoxy-alpha-D-glucopyranoside (GlcNAc-Ins) in the mycothiol biosynthesis pathway. The protein is 1D-myo-inositol 2-acetamido-2-deoxy-alpha-D-glucopyranoside deacetylase of Mycobacteroides abscessus (strain ATCC 19977 / DSM 44196 / CCUG 20993 / CIP 104536 / JCM 13569 / NCTC 13031 / TMC 1543 / L948) (Mycobacterium abscessus).